Here is a 203-residue protein sequence, read N- to C-terminus: ATP-dependent Clp protease proteolytic subunit 2 (203 aa).

Ser-97 acts as the Nucleophile in catalysis. His-122 is an active-site residue.

This sequence belongs to the peptidase S14 family. Fourteen ClpP subunits assemble into 2 heptameric rings which stack back to back to give a disk-like structure with a central cavity, resembling the structure of eukaryotic proteasomes.

Its subcellular location is the cytoplasm. It catalyses the reaction Hydrolysis of proteins to small peptides in the presence of ATP and magnesium. alpha-casein is the usual test substrate. In the absence of ATP, only oligopeptides shorter than five residues are hydrolyzed (such as succinyl-Leu-Tyr-|-NHMec, and Leu-Tyr-Leu-|-Tyr-Trp, in which cleavage of the -Tyr-|-Leu- and -Tyr-|-Trp bonds also occurs).. Cleaves peptides in various proteins in a process that requires ATP hydrolysis. Has a chymotrypsin-like activity. Plays a major role in the degradation of misfolded proteins. The chain is ATP-dependent Clp protease proteolytic subunit 2 from Myxococcus xanthus (strain DK1622).